A 132-amino-acid polypeptide reads, in one-letter code: mRNA interferase toxin YafO (132 aa).

As to quaternary structure, probably forms a complex with the antitoxin YafN which inhibits the mRNA interferase activity.

In terms of biological role, toxic component of a type II toxin-antitoxin (TA) system. A translation-dependent mRNA interferase. Overexpression causes cessation of cell growth and inhibits cell proliferation via inhibition of translation; this blockage is overcome by subsequent expression of antitoxin YafN. Overexpression causes cleavage of a number of mRNAs in a ribosome-dependent fashion. YafO binding to the 50S ribosomal subunit in the translation complex induces mRNA cleavage 3' to the region protected by the ribosome; YafO alone is not able to digest mRNA. The protein is mRNA interferase toxin YafO (yafO) of Escherichia coli (strain K12).